Reading from the N-terminus, the 469-residue chain is MSMSRGTLFDKVWEQHTVATLPSGQTQLFIGLHLIHEVTSPQAFAMLRERGLPVLYPQRTIATVDHIVPTDTLARPLQDALAEEMLQALEANCRAHNIPFFGIGSGRQGIVHVIAPEQGLTQPGMTIACGDSHTSTHGAFGAIAFGIGTSQVRDVLATQTLALNKLKVRKVEVNGSLAAGVYAKDVILHVIRHLGVKGGVGYAYEFAGTTFGQLSMEERMTVCNMAIEGGARCGYVNPDETTFAYLKGRPFAPQGKAWDEAVAWWRSLASDADAEYDDVVTFAAADIAPTVTWGITPGQSVAVDETLPTLESLPVAERAIAAEAYAYMDLQPGQPIQGTKIDVCFIGSCTNGRISDLRQAAKVVEGRKVKPGVKAFVVPGSERVKAQAEAEGLDVVFKAAGFEWRNPGCSMCLAMNPDKLQGRQISASSSNRNFKGRQGSPSGRTLLMSPAMVAAAAIAGEVTDVRAFL.

Positions 349, 409, and 412 each coordinate [4Fe-4S] cluster. A disordered region spans residues 424-443 (QISASSSNRNFKGRQGSPSG).

This sequence belongs to the aconitase/IPM isomerase family. LeuC type 1 subfamily. In terms of assembly, heterodimer of LeuC and LeuD. Requires [4Fe-4S] cluster as cofactor.

The enzyme catalyses (2R,3S)-3-isopropylmalate = (2S)-2-isopropylmalate. The protein operates within amino-acid biosynthesis; L-leucine biosynthesis; L-leucine from 3-methyl-2-oxobutanoate: step 2/4. Its function is as follows. Catalyzes the isomerization between 2-isopropylmalate and 3-isopropylmalate, via the formation of 2-isopropylmaleate. This Thermosynechococcus vestitus (strain NIES-2133 / IAM M-273 / BP-1) protein is 3-isopropylmalate dehydratase large subunit.